Here is a 336-residue protein sequence, read N- to C-terminus: Holliday junction branch migration complex subunit RuvB (336 aa).

A large ATPase domain (RuvB-L) region spans residues 1–185 (MSIIVERLLS…FGVLSRVEYY (185 aa)). ATP-binding positions include Leu24, Arg25, Gly66, Lys69, Thr70, Thr71, 132 to 134 (EDF), Arg175, Tyr185, and Arg222. Thr70 is a Mg(2+) binding site. The small ATPAse domain (RuvB-S) stretch occupies residues 186–256 (TVDQLSAIVE…ITQMALELLQ (71 aa)). The tract at residues 259-336 (KLGLDHIDHK…EHFGMEIPKV (78 aa)) is head domain (RuvB-H). The DNA site is built by Arg314 and Arg319.

Belongs to the RuvB family. In terms of assembly, homohexamer. Forms an RuvA(8)-RuvB(12)-Holliday junction (HJ) complex. HJ DNA is sandwiched between 2 RuvA tetramers; dsDNA enters through RuvA and exits via RuvB. An RuvB hexamer assembles on each DNA strand where it exits the tetramer. Each RuvB hexamer is contacted by two RuvA subunits (via domain III) on 2 adjacent RuvB subunits; this complex drives branch migration. In the full resolvosome a probable DNA-RuvA(4)-RuvB(12)-RuvC(2) complex forms which resolves the HJ.

It localises to the cytoplasm. It catalyses the reaction ATP + H2O = ADP + phosphate + H(+). The RuvA-RuvB-RuvC complex processes Holliday junction (HJ) DNA during genetic recombination and DNA repair, while the RuvA-RuvB complex plays an important role in the rescue of blocked DNA replication forks via replication fork reversal (RFR). RuvA specifically binds to HJ cruciform DNA, conferring on it an open structure. The RuvB hexamer acts as an ATP-dependent pump, pulling dsDNA into and through the RuvAB complex. RuvB forms 2 homohexamers on either side of HJ DNA bound by 1 or 2 RuvA tetramers; 4 subunits per hexamer contact DNA at a time. Coordinated motions by a converter formed by DNA-disengaged RuvB subunits stimulates ATP hydrolysis and nucleotide exchange. Immobilization of the converter enables RuvB to convert the ATP-contained energy into a lever motion, pulling 2 nucleotides of DNA out of the RuvA tetramer per ATP hydrolyzed, thus driving DNA branch migration. The RuvB motors rotate together with the DNA substrate, which together with the progressing nucleotide cycle form the mechanistic basis for DNA recombination by continuous HJ branch migration. Branch migration allows RuvC to scan DNA until it finds its consensus sequence, where it cleaves and resolves cruciform DNA. The protein is Holliday junction branch migration complex subunit RuvB of Bacillus cereus (strain ATCC 14579 / DSM 31 / CCUG 7414 / JCM 2152 / NBRC 15305 / NCIMB 9373 / NCTC 2599 / NRRL B-3711).